The following is a 734-amino-acid chain: Vacuolar transporter chaperone complex subunit 2 (734 aa).

One can recognise an SPX domain in the interval 1-144 (MRFSDSIEAG…PGYSLRPVFQ (144 aa)). Topologically, residues 1-624 (MRFSDSIEAG…EAKVWLANER (624 aa)) are cytoplasmic. Residues 125 to 132 (KIVKKHDK) are important for inositol polyphosphate binding. At Ser-181 the chain carries Phosphoserine. At Thr-529 the chain carries Phosphothreonine. Phosphotyrosine is present on Tyr-583. The helical transmembrane segment at 625–645 (TFLKWLHVVVLLGSLALALYN) threads the bilayer. The Vacuolar portion of the chain corresponds to 646 to 650 (SAGER). A helical membrane pass occupies residues 651–671 (LGQAFGVVYTLLAIFIGFYAW). The Cytoplasmic portion of the chain corresponds to 672–693 (KLHAKRSQMIKSRSPAPMTDYW). A helical membrane pass occupies residues 694 to 714 (GPLIVGTALAISLIVNMSFAL). At 715–734 (KDAVYQNLIEPDRLLVKLFT) the chain is on the vacuolar side.

Belongs to the VTC2/3 family. As to quaternary structure, the VTC core complex is an integral membrane heterooligomer composed of at least the catalytic subunit vtc4 and the accessory subunits vtc1 and vtc2. vtc1 is a small membrane protein without hydrophilic domain. Vtc2 and vtc4 are related and have 2 hydrophilic domains that face the cytosol, an N-terminal SPX domain and the central core domain. The central core in vtc4 is the catalytic domain.

Its subcellular location is the vacuole membrane. Accessory subunit of the vacuolar transporter chaperone (VTC) complex. The VTC complex acts as a vacuolar polyphosphate polymerase that catalyzes the synthesis of inorganic polyphosphate (polyP) via transfer of phosphate from ATP to a growing polyP chain, releasing ADP. VTC exposes its catalytic domain vtc4 to the cytosol, where the growing polyP chain winds through a tunnel-shaped pocket, integrating cytoplasmic polymer synthesis with polyP membrane translocation. The VTC complex carries 9 vacuolar transmembrane domains, which are likely to constitute the translocation channel into the organelle lumen. PolyP synthesis is tightly coupled to its transport into the vacuole lumen, in order to avoid otherwise toxic intermediates in the cytosol, and it depends on the proton gradient across the membrane, formed by V-ATPase. The VTC complex also plays a role in vacuolar membrane fusion. The chain is Vacuolar transporter chaperone complex subunit 2 (vtc2) from Schizosaccharomyces pombe (strain 972 / ATCC 24843) (Fission yeast).